We begin with the raw amino-acid sequence, 302 residues long: Segregation and condensation protein A (302 aa).

The protein belongs to the ScpA family. Component of a cohesin-like complex composed of ScpA, ScpB and the Smc homodimer, in which ScpA and ScpB bind to the head domain of Smc. The presence of the three proteins is required for the association of the complex with DNA.

It is found in the cytoplasm. Participates in chromosomal partition during cell division. May act via the formation of a condensin-like complex containing Smc and ScpB that pull DNA away from mid-cell into both cell halves. The chain is Segregation and condensation protein A from Xylella fastidiosa (strain 9a5c).